We begin with the raw amino-acid sequence, 169 residues long: Peptide methionine sulfoxide reductase MsrA (169 aa).

Cysteine 10 is a catalytic residue.

Belongs to the MsrA Met sulfoxide reductase family.

It catalyses the reaction L-methionyl-[protein] + [thioredoxin]-disulfide + H2O = L-methionyl-(S)-S-oxide-[protein] + [thioredoxin]-dithiol. The enzyme catalyses [thioredoxin]-disulfide + L-methionine + H2O = L-methionine (S)-S-oxide + [thioredoxin]-dithiol. Has an important function as a repair enzyme for proteins that have been inactivated by oxidation. Catalyzes the reversible oxidation-reduction of methionine sulfoxide in proteins to methionine. The protein is Peptide methionine sulfoxide reductase MsrA of Streptococcus equi subsp. zooepidemicus (strain MGCS10565).